The following is a 91-amino-acid chain: LYR motif-containing protein 4 (91 aa).

Residues arginine 6 and lysine 44 each coordinate pantetheine 4'-phosphate. Position 47 is an N6-succinyllysine (lysine 47).

It belongs to the complex I LYR family. As to quaternary structure, homodimer. Component of the mitochondrial core iron-sulfur cluster (ISC) complex composed of NFS1, LYRM4, NDUFAB1, ISCU, FXN, and FDX2; this complex is a heterohexamer containing two copies of each monomer. Component of the cyteine desulfurase complex composed of NFS1, LYRM4 and NDUFAB1; this complex contributes to the stability and cysteine desulfurase activity of NFS1. Interacts with FXN; this interaction is nickel-dependent. Interacts with the cytoplasmic form of NFS1; the complex increases the stability of NFS1. Forms a complex with the cytoplasmic form of NFS1; this complex increases the stability and cysteine desulfurase activity of NFS1. Interacts with NFS1. Component of a complex composed of FXN, NFS1, LYRM4 and ISCU.

The protein resides in the mitochondrion. Its subcellular location is the nucleus. The protein operates within cofactor biosynthesis; iron-sulfur cluster biosynthesis. Functionally, stabilizing factor, of the core iron-sulfur cluster (ISC) assembly complex, that regulates, in association with NDUFAB1, the stability and the cysteine desulfurase activity of NFS1 and participates in the [2Fe-2S] clusters assembly on the scaffolding protein ISCU. The core iron-sulfur cluster (ISC) assembly complex is involved in the de novo synthesis of a [2Fe-2S] cluster, the first step of the mitochondrial iron-sulfur protein biogenesis. This process is initiated by the cysteine desulfurase complex (NFS1:LYRM4:NDUFAB1) that produces persulfide which is delivered on the scaffold protein ISCU in a FXN-dependent manner. Then this complex is stabilized by FDX2 which provides reducing equivalents to accomplish the [2Fe-2S] cluster assembly. Finally, the [2Fe-2S] cluster is transferred from ISCU to chaperone proteins, including HSCB, HSPA9 and GLRX5. May also participates in the iron-sulfur protein biogenesis in the cytoplasm through its interaction with the cytoplasmic form of NFS1. This Mus musculus (Mouse) protein is LYR motif-containing protein 4.